A 198-amino-acid polypeptide reads, in one-letter code: Penicillin-binding protein activator LpoB (198 aa).

The N-terminal stretch at 1 to 19 (MIRSVNRTGALMMALILSG) is a signal peptide. Cys20 carries the N-palmitoyl cysteine lipid modification. Cys20 carries S-diacylglycerol cysteine lipidation. Residues 26–37 (QPAPVEPTQPVE) show a composition bias toward low complexity. The interval 26–59 (QPAPVEPTQPVEPVQPVPQPEQPIPQPQPVPQPP) is disordered. A compositionally biased stretch (pro residues) spans 38–59 (PVQPVPQPEQPIPQPQPVPQPP).

The protein belongs to the LpoB family. In terms of assembly, interacts with PBP1b.

The protein localises to the cell outer membrane. Its function is as follows. Regulator of peptidoglycan synthesis that is essential for the function of penicillin-binding protein 1B (PBP1b). The chain is Penicillin-binding protein activator LpoB from Pantoea ananatis (strain LMG 20103).